The following is a 904-amino-acid chain: Translation initiation factor IF-2 (904 aa).

Disordered regions lie at residues 103 to 122 (YVKSENEGSGRAAPMTPDEE), 137 to 252 (NLEE…MVAG), and 267 to 315 (HLSA…FERP). Residues 137 to 177 (NLEEQQRLAESDRVRDEAIQRKREEEQAAKDRAEAERKAAE) are compositionally biased toward basic and acidic residues. 2 stretches are compositionally biased toward low complexity: residues 178–230 (EAAA…AAPA) and 280–293 (RGKPTGRPGSSSSR). The tr-type G domain occupies 403–572 (SRPPVVTIMG…SLQAEVLELK (170 aa)). Positions 412 to 419 (GHVDHGKT) are G1. 412–419 (GHVDHGKT) contacts GTP. The interval 437 to 441 (GITQH) is G2. Residues 458-461 (DTPG) form a G3 region. GTP is bound by residues 458–462 (DTPGH) and 512–515 (NKID). The interval 512–515 (NKID) is G4. Positions 548–550 (SAK) are G5.

It belongs to the TRAFAC class translation factor GTPase superfamily. Classic translation factor GTPase family. IF-2 subfamily.

It is found in the cytoplasm. In terms of biological role, one of the essential components for the initiation of protein synthesis. Protects formylmethionyl-tRNA from spontaneous hydrolysis and promotes its binding to the 30S ribosomal subunits. Also involved in the hydrolysis of GTP during the formation of the 70S ribosomal complex. The chain is Translation initiation factor IF-2 from Xanthomonas euvesicatoria pv. vesicatoria (strain 85-10) (Xanthomonas campestris pv. vesicatoria).